Consider the following 1228-residue polypeptide: Apical endosomal glycoprotein (1228 aa).

A signal peptide spans 1–21; it reads MCLPSHLLSTWVLFMAAQSLG. Topologically, residues 23 to 1159 are extracellular; sequence TWLPNHCRSP…GEVAAPVSVP (1137 aa). The region spanning 28–49 is the LDL-receptor class A 1; truncated domain; it reads HCRSPIKAVCNFVCDCGDCSDE. Residues 65–223 form the MAM 1 domain; the sequence is FTCNFEQDSC…DDVEFRDCGL (159 aa). An N-linked (GlcNAc...) asparagine glycan is attached at N204. The region spanning 229–267 is the LDL-receptor class A 2 domain; the sequence is RCPLGHHHCQNKACVEPHQLCDGEDNCGDRSDEDPLICS. Intrachain disulfides connect C230-C242, C237-C255, and C249-C266. The region spanning 270–426 is the MAM 2 domain; it reads MATDFETGLG…DLIMSSHCML (157 aa). N290 and N340 each carry an N-linked (GlcNAc...) asparagine glycan. The LDL-receptor class A 3 domain occupies 457–492; that stretch reads TCEPGHLSCGDLCVPPEQLCDFQKHCAEGEDEHKCG. 3 disulfides stabilise this stretch: C458–C469, C465–C482, and C476–C491. MAM domains follow at residues 492-649, 659-815, 817-975, and 977-1144; these read GTTD…DCNP, LSCN…PCWA, KSCS…PCPQ, and GSCD…QCKQ. N-linked (GlcNAc...) asparagine glycosylation is present at N641. A glycan (N-linked (GlcNAc...) asparagine) is linked at N841. The helical transmembrane segment at 1160–1180 threads the bilayer; sequence VAVGGALLFFMFLVLMGLGGW. The Cytoplasmic portion of the chain corresponds to 1181–1228; it reads HWLQKQHCPGQRSTDAAASGFANILFNADHVTLPESITSNPQSPPDLA.

Its subcellular location is the membrane. In terms of biological role, probably involved in the sorting and selective transport of receptors and ligands across polarized epithelia. This Mus musculus (Mouse) protein is Apical endosomal glycoprotein.